A 166-amino-acid polypeptide reads, in one-letter code: 6,7-dimethyl-8-ribityllumazine synthase (166 aa).

Residues phenylalanine 24, 58–60, and 82–84 each bind 5-amino-6-(D-ribitylamino)uracil; these read ALE and AVI. 87–88 lines the (2S)-2-hydroxy-3-oxobutyl phosphate pocket; the sequence is ET. The Proton donor role is filled by histidine 90. Residue asparagine 115 coordinates 5-amino-6-(D-ribitylamino)uracil. Arginine 129 is a (2S)-2-hydroxy-3-oxobutyl phosphate binding site.

Belongs to the DMRL synthase family.

The enzyme catalyses (2S)-2-hydroxy-3-oxobutyl phosphate + 5-amino-6-(D-ribitylamino)uracil = 6,7-dimethyl-8-(1-D-ribityl)lumazine + phosphate + 2 H2O + H(+). Its pathway is cofactor biosynthesis; riboflavin biosynthesis; riboflavin from 2-hydroxy-3-oxobutyl phosphate and 5-amino-6-(D-ribitylamino)uracil: step 1/2. Catalyzes the formation of 6,7-dimethyl-8-ribityllumazine by condensation of 5-amino-6-(D-ribitylamino)uracil with 3,4-dihydroxy-2-butanone 4-phosphate. This is the penultimate step in the biosynthesis of riboflavin. The chain is 6,7-dimethyl-8-ribityllumazine synthase from Ralstonia pickettii (strain 12J).